A 309-amino-acid chain; its full sequence is Ribosomal RNA small subunit methyltransferase H (309 aa).

Residues Gly-33–His-35, Asp-53, Phe-79, Asp-100, and Gln-107 contribute to the S-adenosyl-L-methionine site.

It belongs to the methyltransferase superfamily. RsmH family.

It localises to the cytoplasm. It catalyses the reaction cytidine(1402) in 16S rRNA + S-adenosyl-L-methionine = N(4)-methylcytidine(1402) in 16S rRNA + S-adenosyl-L-homocysteine + H(+). Its function is as follows. Specifically methylates the N4 position of cytidine in position 1402 (C1402) of 16S rRNA. The protein is Ribosomal RNA small subunit methyltransferase H of Clostridium botulinum (strain Okra / Type B1).